The primary structure comprises 526 residues: Meiotically up-regulated gene 99 protein, mitochondrial (526 aa).

Helical transmembrane passes span 398–418 (TLYT…LYFV) and 421–441 (FSLY…LYYL).

It is found in the mitochondrion membrane. In terms of biological role, required for correct meiotic chromosome segregation. Appears to also have role in sporulation. The sequence is that of Meiotically up-regulated gene 99 protein, mitochondrial (mug99) from Schizosaccharomyces pombe (strain 972 / ATCC 24843) (Fission yeast).